Here is a 114-residue protein sequence, read N- to C-terminus: Large ribosomal subunit protein eL30 (114 aa).

Belongs to the eukaryotic ribosomal protein eL30 family.

The chain is Large ribosomal subunit protein eL30 (RPL30) from Branchiostoma belcheri (Amphioxus).